The following is a 553-amino-acid chain: MHALLRRVTRGNGFYIGDLFHAAAGHDATTPVTLDQPLQYAPELGTRFTVGQLAEQTDELAARLWAAGVRPTERVALYKKDNFDIALHACAAARIGAVPALLSPALEAPVVRTLLDRLDGPWLLTDATTLAGPLGTVLAPASVRAVLLTTGTPAEGALPAAGATGPAREGDAPPPAPVVRLADHRGAPKRPPVFLHPRQPSLITHSSGTTGVPKLAVHCPEAGWHRLVPQKVVSWPIRGKEKAALCMTFVHSRFYQGLAMFLSHGNPMLIAVDPDPSRIGPLFARERPGYIETHPNTYVDWEALADAPGEPLAGVRVFGATFDAMHPRTIQRMLGASRRTRPLFVQFYGQSEIGPMAGRWYTRRSAARMNGRCVGLPLPGFISLRVVDDAGKRLRGGRTGHLEVRSRTRILTYLGEDQRYAEQLHDGWWRVGDMGRRDRWGLLHLLDREVDRIGDLESSLAVEDLLMSRLEELREVVLVPGADGEPVPVVATVDESPLDAARWQRATSDLPTMAPVRQFRFEDLPRTSTRKIQKPELARLIQGVRATDQGVGA.

Over residues 157–167 (ALPAAGATGPA) the composition is skewed to low complexity. The disordered stretch occupies residues 157 to 178 (ALPAAGATGPAREGDAPPPAPV).

This sequence belongs to the ATP-dependent AMP-binding enzyme family.

It carries out the reaction 3-amino-2-hydroxy-4-methoxybenzoate + nitrite + ATP = cremeomycin + AMP + diphosphate + H2O. The protein operates within antibiotic biosynthesis. Functionally, part of a gene cluster involved in the biosynthesis of cremeomycin, a light-sensitive o-diazoquinone with antibacterial and antiproliferative effects. Catalyzes the last step of cremeomycin biosynthesis, the diazotization of 3-amino-2-hydroxy-4-methoxybenzoate (3,2,4-AHMBA) with nitrite to generate cremeomycin. In Streptomyces cremeus, this protein is 3-amino-2-hydroxy-4-methoxybenzoate diazotase.